Here is a 182-residue protein sequence, read N- to C-terminus: MSDNLSLHGTTILCLKKNEEIIIAADGQVSHGNTVLKSTARKLRTIANNKIIAGFAGSTADGLALFEKLAVKIEQHKHNLLRSAVELAKDWRSDKYLRRLEAMMIVADRSHILILTGNGDVVEPENNVAAIGSGGLFALSAARALMSYENNLTAEEIALKSMNIAADLCVFSNHNIIMEKVV.

Thr-10 is an active-site residue. Residues Ala-166, Cys-169, and Ser-172 each contribute to the Na(+) site.

It belongs to the peptidase T1B family. HslV subfamily. A double ring-shaped homohexamer of HslV is capped on each side by a ring-shaped HslU homohexamer. The assembly of the HslU/HslV complex is dependent on binding of ATP.

It is found in the cytoplasm. The catalysed reaction is ATP-dependent cleavage of peptide bonds with broad specificity.. Allosterically activated by HslU binding. Its function is as follows. Protease subunit of a proteasome-like degradation complex believed to be a general protein degrading machinery. This is ATP-dependent protease subunit HslV from Rickettsia africae (strain ESF-5).